The chain runs to 1095 residues: Formin-like protein 2 (1095 aa).

Residues Leu-23–Glu-469 form the GBD/FH3 domain. The stretch at Leu-381–Gln-478 forms a coiled coil. The tract at residues Pro-521 to Ser-602 is disordered. Pro residues-rich tracts occupy residues Gly-524 to Pro-534, Ala-548 to Gly-576, and Pro-583 to Pro-599. Residues Ile-617–Ala-1008 enclose the FH2 domain.

It belongs to the formin homology family. As to quaternary structure, interacts with TCP11L2; this interaction promotes muscle-derived satellite cell (MDSC) migration and differentiation.

Its subcellular location is the cytoplasm. Plays a role in the regulation of cell morphology and cytoskeletal organization. Required in the cortical actin filament dynamics. The polypeptide is Formin-like protein 2 (Bos taurus (Bovine)).